Here is a 133-residue protein sequence, read N- to C-terminus: Transcription antitermination protein NusB (133 aa).

The protein belongs to the NusB family.

In terms of biological role, involved in transcription antitermination. Required for transcription of ribosomal RNA (rRNA) genes. Binds specifically to the boxA antiterminator sequence of the ribosomal RNA (rrn) operons. This Shouchella clausii (strain KSM-K16) (Alkalihalobacillus clausii) protein is Transcription antitermination protein NusB.